A 517-amino-acid polypeptide reads, in one-letter code: Aldehyde dehydrogenase X, mitochondrial (517 aa).

The N-terminal 17 residues, 1–17 (MLRFLAPRLLSLQGRTA), are a transit peptide targeting the mitochondrion. K51 is modified (N6-acetyllysine). The residue at position 52 (K52) is an N6-acetyllysine; alternate. Position 52 is an N6-succinyllysine; alternate (K52). The residue at position 81 (K81) is an N6-succinyllysine. 262 to 267 (GSTEVG) serves as a coordination point for NAD(+). The Proton acceptor role is filled by E285. Residue C319 is the Nucleophile of the active site. K364, K383, K399, K414, and K426 each carry N6-acetyllysine; alternate. N6-succinyllysine; alternate is present on residues K364, K383, K399, K414, and K426. K429 carries the N6-acetyllysine modification.

This sequence belongs to the aldehyde dehydrogenase family. Homotetramer.

It is found in the mitochondrion matrix. The enzyme catalyses an aldehyde + NAD(+) + H2O = a carboxylate + NADH + 2 H(+). It participates in alcohol metabolism; ethanol degradation; acetate from ethanol: step 2/2. Functionally, ALDHs play a major role in the detoxification of alcohol-derived acetaldehyde. They are involved in the metabolism of corticosteroids, biogenic amines, neurotransmitters, and lipid peroxidation. The chain is Aldehyde dehydrogenase X, mitochondrial (ALDH1B1) from Pongo abelii (Sumatran orangutan).